The sequence spans 168 residues: Ribosome maturation factor RimM (168 aa).

In terms of domain architecture, PRC barrel spans 94–167 (DGQYYYHQII…FVTVELMEGL (74 aa)).

It belongs to the RimM family. Binds ribosomal protein uS19.

It is found in the cytoplasm. Its function is as follows. An accessory protein needed during the final step in the assembly of 30S ribosomal subunit, possibly for assembly of the head region. Essential for efficient processing of 16S rRNA. May be needed both before and after RbfA during the maturation of 16S rRNA. It has affinity for free ribosomal 30S subunits but not for 70S ribosomes. The protein is Ribosome maturation factor RimM of Limosilactobacillus reuteri (strain DSM 20016) (Lactobacillus reuteri).